The primary structure comprises 483 residues: MKGLIARFIAGFALLLWAWDMVFPWQQLMQAEENRYNQIQQRKILRVGMVNHPLSYFIGAEGTAGIEYELAKSFANYLDVRLDIKTFDNSEQLFSALKDNKVDIAAAGLLYQPELSKQFQIGSAYYSASWQVVYKKGSNRPYKLSELEGDLIIPAGSAVLPILQRLKEDNPKLSWQTTNQFTQEELLLQVAEGKIPYTVGISVDISAAQHIRPNIAVGFDLTDEAPVLWYLPNSSYSELQAAVLDFMNHANETGLISRIEEKYFNHLAHFDYVDIQSYLKAIKLVLPKYQSLFEKYRGDLEWQMLAAIAYQESHWDPNATSPTGVRGMMMLTRDTAERMKITDRTSAEQSIRAGSEYLHMLMRQIPETVPKEDRIWYGLAAYNMGLGHLLDVRRLTRQLGGNPDNWLDVKKNLPLLAEKRHYSGLKYGYARGFEAFQYVENIRRYYSSIINHQRVEEQQIQNNEEQSSVPQEISKESDSTLKE.

An N-terminal signal peptide occupies residues methionine 1 to alanine 18. Positions tryptophan 19–leucine 267 are non-LT domain. The tract at residues histidine 269 to glutamate 483 is LT domain. The active site involves glutamate 312. Residues glutamine 459 to glutamate 483 form a disordered region. Over residues isoleucine 473–glutamate 483 the composition is skewed to basic and acidic residues.

This sequence in the N-terminal section; belongs to the bacterial solute-binding protein 3 family. The protein in the C-terminal section; belongs to the transglycosylase Slt family.

The protein localises to the cell outer membrane. It catalyses the reaction Exolytic cleavage of the (1-&gt;4)-beta-glycosidic linkage between N-acetylmuramic acid (MurNAc) and N-acetylglucosamine (GlcNAc) residues in peptidoglycan, from either the reducing or the non-reducing ends of the peptidoglycan chains, with concomitant formation of a 1,6-anhydrobond in the MurNAc residue.. Murein-degrading enzyme that degrades murein glycan strands and insoluble, high-molecular weight murein sacculi, with the concomitant formation of a 1,6-anhydromuramoyl product. Lytic transglycosylases (LTs) play an integral role in the metabolism of the peptidoglycan (PG) sacculus. Their lytic action creates space within the PG sacculus to allow for its expansion as well as for the insertion of various structures such as secretion systems and flagella. The chain is Membrane-bound lytic murein transglycosylase F from Actinobacillus pleuropneumoniae serotype 7 (strain AP76).